The sequence spans 185 residues: Elongation factor P (185 aa).

This sequence belongs to the elongation factor P family.

It is found in the cytoplasm. The protein operates within protein biosynthesis; polypeptide chain elongation. Its function is as follows. Involved in peptide bond synthesis. Stimulates efficient translation and peptide-bond synthesis on native or reconstituted 70S ribosomes in vitro. Probably functions indirectly by altering the affinity of the ribosome for aminoacyl-tRNA, thus increasing their reactivity as acceptors for peptidyl transferase. The chain is Elongation factor P from Bacillus cytotoxicus (strain DSM 22905 / CIP 110041 / 391-98 / NVH 391-98).